We begin with the raw amino-acid sequence, 120 residues long: Large ribosomal subunit protein bL12 (120 aa).

The protein belongs to the bacterial ribosomal protein bL12 family. As to quaternary structure, homodimer. Part of the ribosomal stalk of the 50S ribosomal subunit. Forms a multimeric L10(L12)X complex, where L10 forms an elongated spine to which 2 to 4 L12 dimers bind in a sequential fashion. Binds GTP-bound translation factors.

Its function is as follows. Forms part of the ribosomal stalk which helps the ribosome interact with GTP-bound translation factors. Is thus essential for accurate translation. This is Large ribosomal subunit protein bL12 from Shouchella clausii (strain KSM-K16) (Alkalihalobacillus clausii).